Consider the following 130-residue polypeptide: Large ribosomal subunit protein bL21 (130 aa).

The disordered stretch occupies residues 103 to 130; it reads AGGKTSKAEPRKTRKAEPAAESAPAAAE. The segment covering 108–120 has biased composition (basic and acidic residues); sequence SKAEPRKTRKAEP. The segment covering 121-130 has biased composition (low complexity); it reads AAESAPAAAE.

The protein belongs to the bacterial ribosomal protein bL21 family. Part of the 50S ribosomal subunit. Contacts protein L20.

This protein binds to 23S rRNA in the presence of protein L20. The protein is Large ribosomal subunit protein bL21 of Methylorubrum extorquens (strain CM4 / NCIMB 13688) (Methylobacterium extorquens).